The primary structure comprises 304 residues: uncharacterized protein (304 aa).

This is an uncharacterized protein from Methanocaldococcus jannaschii (strain ATCC 43067 / DSM 2661 / JAL-1 / JCM 10045 / NBRC 100440) (Methanococcus jannaschii).